A 495-amino-acid polypeptide reads, in one-letter code: Amorpha-4,11-diene 12-monooxygenase (495 aa).

At Met-1–Lys-6 the chain is on the cytoplasmic side. A helical; Signal-anchor for type II membrane protein transmembrane segment spans residues Ala-7–Ala-29. Over Thr-30–Phe-495 the chain is Lumenal. Residues Asn-176, Asn-261, Asn-267, Asn-386, and Asn-417 are each glycosylated (N-linked (GlcNAc...) asparagine). Heme is bound at residue Cys-439.

The protein belongs to the cytochrome P450 family. Requires heme as cofactor. As to expression, highly expressed both in apical and sub-apical cells of glandular secretory trichomes. Detected in flower buds, leaves and roots. Also present in non-glandular trichome cells.

The protein localises to the endoplasmic reticulum membrane. It catalyses the reaction (+)-amorpha-4,11-diene + 3 reduced [NADPH--hemoprotein reductase] + 3 O2 = (+)-artemisinate + 3 oxidized [NADPH--hemoprotein reductase] + 4 H2O + 4 H(+). It participates in sesquiterpene biosynthesis. Involved in the biosynthesis of the antimalarial endoperoxide artemisinin. Catalyzes three consecutive oxidations of amorpha-4,11-diene to produce artemisinic acid, with artemisinic alcohol and artemisinic aldehyde as intermediates products, but is unable to oxidize germacrene A. No activity with limonene, alpha-pinene, beta-pinene, pinocarveol, (-)-alloisolongifolene, caryophyllene, (-)-alpha-gurjunene, (+)-gamma-gurjunene, (+)-ledene, (+)-beta-selinene and (+)-valencene as substrates. This chain is Amorpha-4,11-diene 12-monooxygenase, found in Artemisia annua (Sweet wormwood).